Reading from the N-terminus, the 418-residue chain is MKLFVQLVLFISLFIPYSTKAVLYVDIKKSNIGNIDLVVSKCACKTEVENELSESITKVIETNLSNCGLFNVKRDAKVESWKSDTVVTISLSEVSNRNLELSFRLSDSFTNRELLTQSVVFLAKDWRKISHLVSDLIHDRLIGEKGHFNTKITYIAEEKDSNYKSVRKIAVMNQDGSNIKYLTNGEKFVSTPRFSPNGKGIVYISYTNGKSYIILKNLKDNTESIISAFEGVISAPRFSPDGKSLFISHSLSGETNILSLDLSSKRTKKITKGSAISTSPSLSPDQKYMVFSSDISGSQQLYIIDFTKKSKKPKRISFGNGRYATPVWSPKGDLIAFTKIQSGKFYIGVMKPDGKEERLLSEGHKIESPAWLPNGREIIFTNAESPSNSKLYLVDLVKKNQKMVFTPTNASLPDWSYF.

Residues 1–21 (MKLFVQLVLFISLFIPYSTKA) form the signal peptide.

This sequence belongs to the TolB family. The Tol-Pal system is composed of five core proteins: the inner membrane proteins TolA, TolQ and TolR, the periplasmic protein TolB and the outer membrane protein Pal. They form a network linking the inner and outer membranes and the peptidoglycan layer.

The protein resides in the periplasm. Its function is as follows. Part of the Tol-Pal system, which plays a role in outer membrane invagination during cell division and is important for maintaining outer membrane integrity. The chain is Tol-Pal system protein TolB from Wolbachia pipientis subsp. Culex pipiens (strain wPip).